A 35-amino-acid polypeptide reads, in one-letter code: Purotoxin-1 (35 aa).

4 disulfides stabilise this stretch: C3–C16, C10–C21, C15–C32, and C23–C30.

It belongs to the neurotoxin 33 family. As to expression, expressed by the venom gland.

The protein localises to the secreted. In terms of biological role, inhibits P2RX3 receptors. Has an analgesic effect in rat. Enhances the high-affinity desensitization of P2RX3 purinoceptors. At 50 nM, decreases the IC(50) for ambient ATP from 46.5 nM to 12.7 nM in mouse P2RX3. This is Purotoxin-1 from Alopecosa marikovskyi (Wolf spider).